Reading from the N-terminus, the 728-residue chain is Catalase-peroxidase 2 (728 aa).

Positions 91–214 (WHAAGTYRTG…LAAVQMGLIY (124 aa)) form a cross-link, tryptophyl-tyrosyl-methioninium (Trp-Tyr) (with M-240). Histidine 92 acts as the Proton acceptor in catalysis. The tryptophyl-tyrosyl-methioninium (Tyr-Met) (with W-91) cross-link spans 214–240 (YVNPEGPNGNPDPAKAAVDIRETFARM). Position 255 (histidine 255) interacts with heme b. Positions 338–362 (WKPNGDAGANSIPDPYDPSRRRGPT) are disordered.

This sequence belongs to the peroxidase family. Peroxidase/catalase subfamily. As to quaternary structure, homodimer or homotetramer. Heme b serves as cofactor. Formation of the three residue Trp-Tyr-Met cross-link is important for the catalase, but not the peroxidase activity of the enzyme.

The enzyme catalyses H2O2 + AH2 = A + 2 H2O. The catalysed reaction is 2 H2O2 = O2 + 2 H2O. In terms of biological role, bifunctional enzyme with both catalase and broad-spectrum peroxidase activity. This is Catalase-peroxidase 2 from Cupriavidus pinatubonensis (strain JMP 134 / LMG 1197) (Cupriavidus necator (strain JMP 134)).